We begin with the raw amino-acid sequence, 395 residues long: MLTTMSASSNTNSLIEKEIDDEDMLSPIKSNNLVVRVNQDTDDNLQALFDSVLNPGDAKRPLQLPLRMRKLPNSFFTPPAPSHSRANSADSTYDAGSQSSINIGNKASIVQQPDGQSPIAAIPQLQIQPSPQHSRLAIHHSRARSSPASLQQNYNVRARSDAAAANNPNANPSSQQQPAGPTFPENSAQEFPSGAPASSAIDLDAMNTCMSQDIPMSMQTVHKKQRSYDVISPIQLNRQLGALPPGWEQAKTNDGQIYYLNHTTKSTQWEDPRIQYRQQQQILMAERIKQNDVLQTTKQTTTSTIANNLGPLPDGWEQAVTESGDLYFINHIDRTTSWNDPRMQSGLSVLDCPDNLVSSLQIEDNLCSNLFNDAQAIVNPPSSHKPDDLEWYKIN.

The segment at 73 to 100 is disordered; sequence NSFFTPPAPSHSRANSADSTYDAGSQSS. A phosphoserine mark is found at Ser82, Ser88, Ser100, Ser117, and Ser145. The segment covering 84–100 has biased composition (polar residues); that stretch reads SRANSADSTYDAGSQSS. 2 disordered regions span residues 129–150 and 162–199; these read PSPQ…PASL and AAAA…PASS. Ser146 carries the phosphoserine; by CDK7 modification. Ser149 bears the Phosphoserine mark. Low complexity predominate over residues 162–179; that stretch reads AAAANNPNANPSSQQQPA. Residue Ser227 is modified to Phosphoserine. Position 228 is a phosphotyrosine (Tyr228). Ser232 carries the post-translational modification Phosphoserine. 2 WW domains span residues 241–274 and 310–343; these read GALP…DPRI and GPLP…DPRM.

The protein belongs to the YAP1 family. As to quaternary structure, interacts (via WW domains) with wts. Interacts (via N-terminus) with sd (via C-terminus) and this interaction enhances the transcriptional activity of sd. The phosphorylated form interacts with 14-3-3epsilon and 14-3-3zeta. Interacts with Ack and ex. Its activity is regulated by multiple phosphorylation events. Phosphorylation at Ser-88, Ser-145 and Ser-227 negatively regulate its activity and restrict its nuclear localization. Wts-mediated phosphorylation at Ser-145 promotes interaction with 14-3-3epsilon and 14-3-3zeta. Phosphorylation at Ser-88 and Ser-227 regulate nuclear localization and activity independent of 14-3-3 association. Phosphorylation at Ser-146 by Cdk7 promotes its stability by preventing ubiquitination by the DCX(DCAF12) complex. Post-translationally, ubiquitinated by the DCX(DCAF12) complex, leading to its degradation. Phosphorylation at Ser-146 by Cdk7 prevents ubiquitination by the DCX(DCAF12) complex.

The protein localises to the cytoplasm. Its subcellular location is the nucleus. Its function is as follows. Transcriptional coactivator which is the critical downstream regulatory target in the Hippo/SWH (Sav/Wts/Hpo) signaling pathway that plays a pivotal role in organ size control and tumor suppression by restricting proliferation and promoting apoptosis. The core of this pathway is composed of a kinase cascade wherein Hippo (Hpo), in complex with its regulatory protein Salvador (Sav), phosphorylates and activates Warts (Wts) in complex with its regulatory protein Mats, which in turn phosphorylates and inactivates the Yorkie (Yki) oncoprotein. The Hippo/SWH signaling pathway inhibits the activity of the transcriptional complex formed by Scalloped (sd) and Yki and the target genes of this pathway include cyclin-E (cycE), diap1 and bantam. Regulates the expression of G1/S-specific CycE and diap1, thereby promoting cell proliferation and inhibiting apoptosis. Required for transcriptional activity of sd in wing imaginal disks. Induces expression of expression of vestigial (vg) in wing and haltere disks and the expression of transcription factor E2f (E2f). The protein is Transcriptional coactivator yorkie (yki) of Drosophila melanogaster (Fruit fly).